The sequence spans 942 residues: Valine--tRNA ligase (942 aa).

The 'HIGH' region motif lies at 43 to 53 (PNVTGTLHMGH). The 'KMSKS' region motif lies at 551-555 (KMSKS). Residue Lys-554 participates in ATP binding. The stretch at 876–942 (EGLVDLDAER…AGLREQRAKL (67 aa)) forms a coiled coil.

It belongs to the class-I aminoacyl-tRNA synthetase family. ValS type 1 subfamily. In terms of assembly, monomer.

It localises to the cytoplasm. The enzyme catalyses tRNA(Val) + L-valine + ATP = L-valyl-tRNA(Val) + AMP + diphosphate. Its function is as follows. Catalyzes the attachment of valine to tRNA(Val). As ValRS can inadvertently accommodate and process structurally similar amino acids such as threonine, to avoid such errors, it has a 'posttransfer' editing activity that hydrolyzes mischarged Thr-tRNA(Val) in a tRNA-dependent manner. The polypeptide is Valine--tRNA ligase (Stenotrophomonas maltophilia (strain R551-3)).